An 89-amino-acid polypeptide reads, in one-letter code: Small ribosomal subunit protein uS15 (89 aa).

It belongs to the universal ribosomal protein uS15 family. Part of the 30S ribosomal subunit. Forms a bridge to the 50S subunit in the 70S ribosome, contacting the 23S rRNA.

In terms of biological role, one of the primary rRNA binding proteins, it binds directly to 16S rRNA where it helps nucleate assembly of the platform of the 30S subunit by binding and bridging several RNA helices of the 16S rRNA. Its function is as follows. Forms an intersubunit bridge (bridge B4) with the 23S rRNA of the 50S subunit in the ribosome. In Colwellia psychrerythraea (strain 34H / ATCC BAA-681) (Vibrio psychroerythus), this protein is Small ribosomal subunit protein uS15.